We begin with the raw amino-acid sequence, 172 residues long: 3-hydroxydecanoyl-[acyl-carrier-protein] dehydratase (172 aa).

The active site involves H71.

The protein belongs to the thioester dehydratase family. FabA subfamily. As to quaternary structure, homodimer.

The protein resides in the cytoplasm. The enzyme catalyses a (3R)-hydroxyacyl-[ACP] = a (2E)-enoyl-[ACP] + H2O. It carries out the reaction (3R)-hydroxydecanoyl-[ACP] = (2E)-decenoyl-[ACP] + H2O. It catalyses the reaction (2E)-decenoyl-[ACP] = (3Z)-decenoyl-[ACP]. It participates in lipid metabolism; fatty acid biosynthesis. In terms of biological role, necessary for the introduction of cis unsaturation into fatty acids. Catalyzes the dehydration of (3R)-3-hydroxydecanoyl-ACP to E-(2)-decenoyl-ACP and then its isomerization to Z-(3)-decenoyl-ACP. Can catalyze the dehydratase reaction for beta-hydroxyacyl-ACPs with saturated chain lengths up to 16:0, being most active on intermediate chain length. The polypeptide is 3-hydroxydecanoyl-[acyl-carrier-protein] dehydratase (Serratia proteamaculans (strain 568)).